A 780-amino-acid chain; its full sequence is Vezatin (780 aa).

Transmembrane regions (helical) follow at residues 140–160 (ATPNTWDVSLLFAFISLLIMF) and 162–182 (TCWIVSSWLVWGIILFLYLII). Residues 430–467 (VRSLQLHLKALLNEVIILEDELEKLVCTKETQELLSEA) adopt a coiled-coil conformation. Disordered stretches follow at residues 620-718 (DPVE…PRDT) and 757-780 (QEQTFGDEEEEQLVEGGENEVEEK). Positions 624–643 (SVSNSEPPMNSDTEKVNSNA) are enriched in polar residues. Basic and acidic residues-rich tracts occupy residues 647 to 663 (ETSKPCAGDKEDSRTEY) and 690 to 699 (TMCHQHESEA). Over residues 702-711 (PQAAAAGATA) the composition is skewed to low complexity. A compositionally biased stretch (acidic residues) spans 761–780 (FGDEEEEQLVEGGENEVEEK).

This sequence belongs to the vezatin family. As to quaternary structure, interacts with USH2A (via the cytoplasmic region); the interaction associates VEZT with the USH2 complex at the stereocilia base. Interacts with myosin MYO7A and the cadherin-catenins complex. As to expression, expressed in developing cochlear hair cells. Isoform 1, isoform 2 and isoform 3 are expressed in testis. In the seminiferous epithelium, present exclusively in the acrosome of spermatids (at protein level).

It localises to the cell membrane. It is found in the cell projection. The protein resides in the stereocilium membrane. Its subcellular location is the cell junction. The protein localises to the adherens junction. It localises to the nucleus. It is found in the cytoplasmic vesicle. The protein resides in the secretory vesicle. Its subcellular location is the acrosome. Plays a pivotal role in the establishment of adherens junctions and their maintenance in adult life. Required for morphogenesis of the preimplantation embryo, and for the implantation process. In Mus musculus (Mouse), this protein is Vezatin.